A 468-amino-acid chain; its full sequence is Ribulose bisphosphate carboxylase large chain (468 aa).

At Lys5 the chain carries N6,N6,N6-trimethyllysine. The substrate site is built by Asn114 and Thr164. Lys166 serves as the catalytic Proton acceptor. Lys168 provides a ligand contact to substrate. Residues Lys192, Asp194, and Glu195 each contribute to the Mg(2+) site. Lys192 carries the post-translational modification N6-carboxylysine. Catalysis depends on His285, which acts as the Proton acceptor. Arg286, His318, and Ser370 together coordinate substrate.

This sequence belongs to the RuBisCO large chain family. Type I subfamily. In terms of assembly, heterohexadecamer of 8 large chains and 8 small chains; disulfide-linked. The disulfide link is formed within the large subunit homodimers. Mg(2+) is required as a cofactor. The disulfide bond which can form in the large chain dimeric partners within the hexadecamer appears to be associated with oxidative stress and protein turnover.

Its subcellular location is the plastid. It localises to the chloroplast. The catalysed reaction is 2 (2R)-3-phosphoglycerate + 2 H(+) = D-ribulose 1,5-bisphosphate + CO2 + H2O. It catalyses the reaction D-ribulose 1,5-bisphosphate + O2 = 2-phosphoglycolate + (2R)-3-phosphoglycerate + 2 H(+). In terms of biological role, ruBisCO catalyzes two reactions: the carboxylation of D-ribulose 1,5-bisphosphate, the primary event in carbon dioxide fixation, as well as the oxidative fragmentation of the pentose substrate in the photorespiration process. Both reactions occur simultaneously and in competition at the same active site. The chain is Ribulose bisphosphate carboxylase large chain from Catesbaea spinosa.